The primary structure comprises 507 residues: Aromatase (507 aa).

Position 436 (Cys-436) interacts with heme.

It belongs to the cytochrome P450 family. Heme serves as cofactor.

It is found in the membrane. The catalysed reaction is testosterone + 3 reduced [NADPH--hemoprotein reductase] + 3 O2 = 17beta-estradiol + formate + 3 oxidized [NADPH--hemoprotein reductase] + 4 H2O + 4 H(+). The enzyme catalyses androst-4-ene-3,17-dione + 3 reduced [NADPH--hemoprotein reductase] + 3 O2 = estrone + formate + 3 oxidized [NADPH--hemoprotein reductase] + 4 H2O + 4 H(+). Its function is as follows. Catalyzes the formation of aromatic C18 estrogens from C19 androgens. The protein is Aromatase (CYP19A1) of Gallus gallus (Chicken).